A 152-amino-acid chain; its full sequence is Ribonuclease pancreatic (152 aa).

The N-terminal stretch at methionine 1–glycine 24 is a signal peptide. 2 residues coordinate substrate: lysine 31 and arginine 34. Histidine 36 acts as the Proton acceptor in catalysis. A glycan (N-linked (GlcNAc...) asparagine) is linked at asparagine 46. 4 disulfide bridges follow: cysteine 50/cysteine 108, cysteine 64/cysteine 119, cysteine 82/cysteine 134, and cysteine 89/cysteine 96. Residues lysine 65–threonine 69, lysine 90, and arginine 109 contribute to the substrate site. Asparagine 112 carries N-linked (GlcNAc...) asparagine glycosylation. The active-site Proton donor is histidine 143.

It belongs to the pancreatic ribonuclease family. In terms of assembly, monomer. Interacts with and forms tight 1:1 complexes with RNH1. Dimerization of two such complexes may occur. Interaction with RNH1 inhibits this protein.

The protein localises to the secreted. It catalyses the reaction an [RNA] containing cytidine + H2O = an [RNA]-3'-cytidine-3'-phosphate + a 5'-hydroxy-ribonucleotide-3'-[RNA].. The enzyme catalyses an [RNA] containing uridine + H2O = an [RNA]-3'-uridine-3'-phosphate + a 5'-hydroxy-ribonucleotide-3'-[RNA].. In terms of biological role, endonuclease that catalyzes the cleavage of RNA on the 3' side of pyrimidine nucleotides. Acts on single-stranded and double-stranded RNA. This is Ribonuclease pancreatic (RNASE1) from Papio hamadryas (Hamadryas baboon).